The chain runs to 42 residues: Protein MGF 360-20R (42 aa).

The protein belongs to the asfivirus MGF 360 family.

In terms of biological role, plays a role in virus cell tropism, and may be required for efficient virus replication in macrophages. This chain is Protein MGF 360-20R, found in African swine fever virus (strain Badajoz 1971 Vero-adapted) (Ba71V).